Reading from the N-terminus, the 451-residue chain is UBP1-associated protein 2B (451 aa).

A disordered region spans residues 1–86 (MTKKRKLESE…GNEDDDEEEP (86 aa)). Basic and acidic residues-rich tracts occupy residues 25–38 (CEKEDPEIRNVDNQ) and 49–63 (DTLKEMHEEEAKGED). Residues 67 to 77 (AETSSGSGNQG) show a composition bias toward polar residues. 2 consecutive RRM domains span residues 128 to 236 (RKIF…NVSA) and 227 to 314 (RKIY…QHQH). Disordered stretches follow at residues 302-335 (ANDGPKQVKQHQHNHNSHNQNSRYQRNDNNGYGA) and 423-451 (GGYQTQQPGQGGAGRGQHGAGYGGPYMGR). Residues 431-451 (GQGGAGRGQHGAGYGGPYMGR) are compositionally biased toward gly residues.

Expressed in shoot meristem and flowers.

The protein resides in the nucleus. In terms of biological role, heterogeneous nuclear ribonucleoprotein (hnRNP)-like protein that acts as a component of a complex regulating the turnover of mRNAs in the nucleus. Binds with high affinity to RNA molecules that contain U-rich sequences in 3'-UTRs. May function in complex with UBP1 and contribute to the stabilization of mRNAs in the nucleus. This is UBP1-associated protein 2B (UBA2B) from Arabidopsis thaliana (Mouse-ear cress).